A 172-amino-acid chain; its full sequence is Interferon tau-2 (172 aa).

Disulfide bonds link Cys1/Cys99 and Cys29/Cys139. Asn78 carries N-linked (GlcNAc...) asparagine glycosylation.

It belongs to the alpha/beta interferon family. IFN-alphaII subfamily. As to expression, constitutively and exclusively expressed in the mononuclear cells of the extraembryonic trophectoderm.

The protein resides in the secreted. Its function is as follows. Paracrine hormone primarily responsible for maternal recognition of pregnancy. Interacts with endometrial receptors, probably type I interferon receptors, and blocks estrogen receptor expression, preventing the estrogen-induced increase in oxytocin receptor expression in the endometrium. This results in the suppression of the pulsatile endometrial release of the luteolytic hormone prostaglandin F2-alpha, hindering the regression of the corpus luteum (luteolysis) and therefore a return to ovarian cyclicity. This, and a possible direct effect of IFN-tau on prostaglandin synthesis, leads in turn to continued ovarian progesterone secretion, which stimulates the secretion by the endometrium of the nutrients required for the growth of the conceptus. In summary, displays particularly high antiviral and antiproliferative potency concurrently with particular weak cytotoxicity, high antiluteolytic activity and immunomodulatory properties. In contrast with other IFNs, IFN-tau is not virally inducible. The protein is Interferon tau-2 (IFNT2) of Bos taurus (Bovine).